Here is a 690-residue protein sequence, read N- to C-terminus: Elongation factor G (690 aa).

Residues 8 to 283 (EYIRNIGICA…AVVGFLPSPI (276 aa)) form the tr-type G domain. GTP is bound by residues 17 to 24 (AHIDAGKT), 81 to 85 (DTPGH), and 135 to 138 (NKMD).

The protein belongs to the TRAFAC class translation factor GTPase superfamily. Classic translation factor GTPase family. EF-G/EF-2 subfamily.

It localises to the cytoplasm. In terms of biological role, catalyzes the GTP-dependent ribosomal translocation step during translation elongation. During this step, the ribosome changes from the pre-translocational (PRE) to the post-translocational (POST) state as the newly formed A-site-bound peptidyl-tRNA and P-site-bound deacylated tRNA move to the P and E sites, respectively. Catalyzes the coordinated movement of the two tRNA molecules, the mRNA and conformational changes in the ribosome. In Rickettsia canadensis (strain McKiel), this protein is Elongation factor G.